Reading from the N-terminus, the 362-residue chain is MSNSDDEIQEIEAKRQKMSQEDSEVEIEILDEPEQGKLKNSSMSDEQKLHEFAIITATDEAFAQSILQDVDWDLKKALDVFYGSEAFAEARSAAVMGASSSMASSGAAVMTAEDLKGFEVSVMSWNIDGLDGRSLLTRMKAVAHIVKNVNPDILFLQEVVDRDLAPIDKLQSLYKIYYSNKGCQYYTAILVSKMFDVEKHDVIHFQNSGMYRTLQILEGSIGGLKVFLLNTHLESTREHRPQRCAQFGFCMDKVREIIAQNPGALVFFGGDLNLRDEEVSRVPDGVKDAWEAAGSDNKTKFTWDTFKNDNKQGFHGAKMRFDRLYWSGPLDKVKFTLEGRQRIRSCLCFPSDHWAINATFFA.

The span at 1 to 10 (MSNSDDEIQE) shows a compositional bias: acidic residues. The segment at 1–43 (MSNSDDEIQEIEAKRQKMSQEDSEVEIEILDEPEQGKLKNSSM) is disordered. Over residues 11 to 20 (IEAKRQKMSQ) the composition is skewed to basic and acidic residues. The segment covering 21 to 33 (EDSEVEIEILDEP) has biased composition (acidic residues). The interaction with 5' end of substrate DNA stretch occupies residues 126-130 (NIDGL). Residues aspartate 128 and glutamate 158 each coordinate Mg(2+). An interaction with 5' end of substrate DNA region spans residues 232 to 237 (HLESTR). Residue aspartate 271 is the Proton donor/acceptor of the active site. The tract at residues 273 to 275 (NLR) is interaction with 5' end of substrate DNA.

This sequence belongs to the CCR4/nocturin family. TTRAP/TDP2 subfamily. As to quaternary structure, interacts with mxl-1; the interaction promotes axon regeneration after injury. Interacts with ets-4; the interaction is required for the sumoylation of ets-4. Requires Mg(2+) as cofactor. Mn(2+) serves as cofactor.

The protein localises to the nucleus. It is found in the PML body. In terms of biological role, DNA repair enzyme that can remove a variety of covalent adducts from DNA through hydrolysis of a 5'-phosphodiester bond, giving rise to DNA with a free 5' phosphate. Catalyzes the hydrolysis of dead-end complexes between DNA and the topoisomerase 2 (top2) active site tyrosine residue. Hydrolyzes 5'-phosphoglycolates on protruding 5' ends on DNA double-strand breaks (DSBs) due to DNA damage by radiation and free radicals. Inhibits axon regeneration after neuronal injury by promoting the sumoylation of ets-4, thereby inhibiting the phosphorylation of ets-4 required for probable interaction with cebp-1 and activation of svh-2 expression. The protein is 5'-tyrosyl-DNA phosphodiesterase of Caenorhabditis elegans.